The following is an 88-amino-acid chain: uncharacterized protein (88 aa).

This is an uncharacterized protein from Escherichia coli O157:H7.